The primary structure comprises 439 residues: O-methyltransferase aurJ (439 aa).

Asp-283 serves as a coordination point for S-adenosyl-L-methionine. Residue His-338 is the Proton acceptor of the active site.

The protein belongs to the class I-like SAM-binding methyltransferase superfamily. Cation-independent O-methyltransferase family. COMT subfamily.

It carries out the reaction norrubrofusarin + S-adenosyl-L-methionine = rubrofusarin + S-adenosyl-L-homocysteine + H(+). It participates in pigment biosynthesis. In terms of biological role, O-methyltransferase; part of the gene cluster that mediates the biosynthesis of aurofusarin, a red mycelium pigment which is acting as a mycotoxin. The first step is performed by the polyketide synthase which condenses one acetyl-CoA and 6 malonyl-CoA units to form the first intermediate, the cyclic heptaketide and yellow pigment YWA1. The C2 hydroxyl group in the pyrone ring of YWA1 is probably formed during ring closure by an aldol-type cyclization reaction. The dehydratase aurZ then acts as the first tailoring enzyme in the aurofusarin biosynthetic pathway by converting YWA1 to nor-rubrofusarin. Nor-rubrofusarin is then methylated to rubrofusarin by the O-methyltransferase aurJ. Rubrofusarin is then transported across the plasma membrane by the rubrofusarin-specific pump aurT for further enzymatic processing by the extracellular complex composed of GIP1, aurF, aurO and aurS to yield aurofusarin. The protein is O-methyltransferase aurJ of Gibberella zeae (strain ATCC MYA-4620 / CBS 123657 / FGSC 9075 / NRRL 31084 / PH-1) (Wheat head blight fungus).